A 347-amino-acid chain; its full sequence is MEGCRETEVTNGSNGGLEFNPMKEYMILSSGQQIAVAVLCTLMGLLSALENMAVLYIILSSRRLRRKPSYLFISSLAGADFLASVIFACNFVIFHVFHGVDSNAIFLLKIGSVTMTFTASVGSLLLTAVDRYLCLCYPPTYKALVTRGRALVALCVMWVLSALISYLPLMGWTCCPSPCSELFPLIPNDYLLGWLLFIAILFSGIIYTYGYVLWKAHRHVATLAEHQDRQVPGIARMRLDVRLAKTLGLVLAVLLICWFPALALMGHSLVTTLSDQVKEAFAFCSMLCLVNSMVNPIIYALRSGEIRSAAQHCLIGWKKYLQGLGPEGKEEGPRSSVTETEADVKTT.

Over 1–33 (MEGCRETEVTNGSNGGLEFNPMKEYMILSSGQQ) the chain is Extracellular. The N-linked (GlcNAc...) asparagine glycan is linked to Asn-11. The helical transmembrane segment at 34–59 (IAVAVLCTLMGLLSALENMAVLYIIL) threads the bilayer. The Cytoplasmic segment spans residues 60 to 71 (SSRRLRRKPSYL). The chain crosses the membrane as a helical span at residues 72-92 (FISSLAGADFLASVIFACNFV). The Extracellular portion of the chain corresponds to 93-104 (IFHVFHGVDSNA). A helical membrane pass occupies residues 105 to 129 (IFLLKIGSVTMTFTASVGSLLLTAV). The Cytoplasmic segment spans residues 130 to 149 (DRYLCLCYPPTYKALVTRGR). Residues 150–172 (ALVALCVMWVLSALISYLPLMGW) traverse the membrane as a helical segment. The Extracellular portion of the chain corresponds to 173 to 188 (TCCPSPCSELFPLIPN). Residues 189 to 214 (DYLLGWLLFIAILFSGIIYTYGYVLW) traverse the membrane as a helical segment. The Cytoplasmic segment spans residues 215 to 246 (KAHRHVATLAEHQDRQVPGIARMRLDVRLAKT). The helical transmembrane segment at 247–267 (LGLVLAVLLICWFPALALMGH) threads the bilayer. Residues 268–279 (SLVTTLSDQVKE) are Extracellular-facing. Residues 280 to 301 (AFAFCSMLCLVNSMVNPIIYAL) traverse the membrane as a helical segment. At 302–347 (RSGEIRSAAQHCLIGWKKYLQGLGPEGKEEGPRSSVTETEADVKTT) the chain is on the cytoplasmic side. The interval 326–347 (PEGKEEGPRSSVTETEADVKTT) is disordered. Ser-335 and Ser-336 each carry phosphoserine. Thr-338 is subject to Phosphothreonine.

It belongs to the G-protein coupled receptor 1 family. Expressed by cells of hematopoietic origin. Expressed in skin in suprabasal layers and hair follicles, in brain by neurons and glial cells and by osteoblasts, osteocytes, osteoclasts (at protein level).

The protein localises to the cell membrane. It localises to the cell projection. The protein resides in the dendrite. Its subcellular location is the perikaryon. Functionally, heterotrimeric G protein-coupled receptor for endocannabinoid 2-arachidonoylglycerol mediating inhibition of adenylate cyclase. May function in inflammatory response, nociceptive transmission and bone homeostasis. The protein is Cannabinoid receptor 2 (Cnr2) of Mus musculus (Mouse).